Here is a 173-residue protein sequence, read N- to C-terminus: Peptide methionine sulfoxide reductase MsrA (173 aa).

C10 is an active-site residue.

It belongs to the MsrA Met sulfoxide reductase family.

The catalysed reaction is L-methionyl-[protein] + [thioredoxin]-disulfide + H2O = L-methionyl-(S)-S-oxide-[protein] + [thioredoxin]-dithiol. The enzyme catalyses [thioredoxin]-disulfide + L-methionine + H2O = L-methionine (S)-S-oxide + [thioredoxin]-dithiol. In terms of biological role, has an important function as a repair enzyme for proteins that have been inactivated by oxidation. Catalyzes the reversible oxidation-reduction of methionine sulfoxide in proteins to methionine. This Nautilia profundicola (strain ATCC BAA-1463 / DSM 18972 / AmH) protein is Peptide methionine sulfoxide reductase MsrA.